Consider the following 316-residue polypeptide: PHD finger protein 20-like protein 1 (316 aa).

Residues isoleucine 11–proline 71 enclose the Tudor 1 domain. Residues lysine 75 and lysine 79 each participate in a glycyl lysine isopeptide (Lys-Gly) (interchain with G-Cter in SUMO2) cross-link. Residues phenylalanine 85–lysine 141 enclose the Tudor 2 domain. Residues alanine 183 to serine 237 are disordered. Residues lysine 186–serine 197 show a composition bias toward polar residues. The segment covering asparagine 198–threonine 218 has biased composition (basic and acidic residues).

In terms of assembly, interacts with methylated DNMT1 (DNMT1K142me1). Interacts with SOX2.

The protein localises to the nucleus. Is a negative regulator of proteasomal degradation of a set of methylated proteins, including DNMT1 and SOX2. Involved in the maintainance of embryonic stem cells pluripotency, through the regulation of SOX2 levels. This is PHD finger protein 20-like protein 1 (PHF20L1) from Bos taurus (Bovine).